We begin with the raw amino-acid sequence, 313 residues long: Dehydrogenase/reductase SDR family member 1 (313 aa).

Ile-19 contributes to the NAD(+) binding site. Arg-21 carries the post-translational modification Omega-N-methylarginine. Asp-64 lines the NAD(+) pocket. Ser-151 contributes to the substrate binding site. NAD(+)-binding residues include Tyr-163, Lys-167, and Thr-198. Tyr-163 (proton acceptor) is an active-site residue.

It belongs to the short-chain dehydrogenases/reductases (SDR) family.

The protein localises to the endoplasmic reticulum. It catalyses the reaction 17alpha-estradiol + NADP(+) = estrone + NADPH + H(+). The enzyme catalyses testosterone + NADP(+) = androst-4-ene-3,17-dione + NADPH + H(+). It carries out the reaction prostaglandin E1 + NADPH + H(+) = prostaglandin F1 + NADP(+). The catalysed reaction is isatin + NADPH + H(+) = 3-hydroxyindolin-2-one + NADP(+). Its function is as follows. NADPH-dependent oxidoreductase which catalyzes the reduction of some steroids (estrone, androstene-3,17-dione and cortisone) as well as prostaglandin E1, isatin and xenobiotics in vitro. May have a role in steroid and/or xenobiotic metabolism. This is Dehydrogenase/reductase SDR family member 1 from Mus musculus (Mouse).